The primary structure comprises 751 residues: MDDSALPSNTSNGINGRTAHRRSSSGGDPFQHPDIYYGNPESVERIKNRRRAFSSSLKSFNRQDFHEMLGDRNTRRGSMDPTSGNPRKFLIDVDATLHSLLEREDSDRNMQITIEDVGPKVFSLGTAASHGYNRFDVRGTYMLSNLLQELTIAKDYGRKQIVLDEERLSENPVSRLSRLIKNSFWNSLTRRIDGRNIEVAGRDPKDWTDDPRPRIYVPPGAPEQLEYYRRIAEEKPELRLDVQELAAEITPEYVRDLNEKPGLLALAMEEKYDEKTGKTDFAGVPFVVPGGRFNELYGWDSYMESLGLLASNRVDLAKAMVINFCFCIKHYGKILNANRSYYLTRSQPPFLTDMALRVYDRIQNEPGAMDFLRHAILAAIKEYYSVWMAEPRLDPVSGLSRYRSPGIGVPPETEASHFLHLLTPYAEKHGMEFKEFVQAYNYGKVKEPELDEYFMHDRAVRESGHDTSYRLERVCGNLATVDLNSLLYKYEVDIARVIRVYFKDKLEIPVEFRTPATKDIQSESSSVWDRRARRRKMRMDTYLWDEEKGMYFDYDTVKQERTNYESATTLWAMWAGLVTPRQASAMITKALPRFEEFGGIVSGTEESRGAVGLNRPTRQWDYPYGWAPQQMLAWTGFARYGYQEEAERLAYKWLYMITKAFVDFNGVVVEKYDVTRPIDPHRVDAEYGNQGVDFKGAPREGFGWVNASYVYGLEMLNAHQRRALGAVTPWETYSKAVSAQGSDTVLENRSE.

The span at Met-1 to Asn-15 shows a compositional bias: polar residues. 2 disordered regions span residues Met-1–Ser-42 and Asp-64–Lys-88. The segment covering Asp-64–Ser-78 has biased composition (basic and acidic residues). Residues Asp-105, Asp-107, Asn-109, Gln-111, and Asp-116 each coordinate Ca(2+). Substrate contacts are provided by residues Arg-292, Trp-299–Asp-300, Asn-336, Arg-345–Gln-347, Glu-412, Arg-461, and Gly-464. Active-site proton donor/acceptor residues include Asp-466 and Glu-670.

This sequence belongs to the glycosyl hydrolase 37 family. The cofactor is Ca(2+).

The protein localises to the cytoplasm. It catalyses the reaction alpha,alpha-trehalose + H2O = alpha-D-glucose + beta-D-glucose. Its pathway is carbohydrate degradation. Activated by calcium. Functionally, hydrolyzes intracellular trehalose to glucose. The disaccharide trehalose serves as a storage carbohydrate that is mobilized during conidial germination. Regulates the level of trehalose as a protectant for cell integrity during heat stress. In Emericella nidulans (strain FGSC A4 / ATCC 38163 / CBS 112.46 / NRRL 194 / M139) (Aspergillus nidulans), this protein is Cytosolic neutral trehalase.